Reading from the N-terminus, the 292-residue chain is Elongation factor Ts (292 aa).

An involved in Mg(2+) ion dislocation from EF-Tu region spans residues 79-82 (TDFV).

The protein belongs to the EF-Ts family.

It is found in the cytoplasm. Its function is as follows. Associates with the EF-Tu.GDP complex and induces the exchange of GDP to GTP. It remains bound to the aminoacyl-tRNA.EF-Tu.GTP complex up to the GTP hydrolysis stage on the ribosome. This Xanthomonas euvesicatoria pv. vesicatoria (strain 85-10) (Xanthomonas campestris pv. vesicatoria) protein is Elongation factor Ts.